The following is a 177-amino-acid chain: Bifunctional protein PyrR (177 aa).

A PRPP-binding motif is present at residues 101 to 113 (IILIDDVLYTGRT).

Belongs to the purine/pyrimidine phosphoribosyltransferase family. PyrR subfamily.

It carries out the reaction UMP + diphosphate = 5-phospho-alpha-D-ribose 1-diphosphate + uracil. In terms of biological role, regulates the transcription of the pyrimidine nucleotide (pyr) operon in response to exogenous pyrimidines. Its function is as follows. Also displays a weak uracil phosphoribosyltransferase activity which is not physiologically significant. This Endomicrobium trichonymphae protein is Bifunctional protein PyrR.